The chain runs to 289 residues: Phosphatidylglycerol--prolipoprotein diacylglyceryl transferase (289 aa).

The next 3 membrane-spanning stretches (helical) occupy residues 24–44, 70–90, and 111–131; these read GIAI…VYLL, GGVL…DWFL, and GING…LWLF. R158 lines the a 1,2-diacyl-sn-glycero-3-phospho-(1'-sn-glycerol) pocket. Transmembrane regions (helical) follow at residues 219-239 and 253-273; these read GYLS…IEFF and FSMG…ILVW.

It belongs to the Lgt family.

Its subcellular location is the cell inner membrane. It catalyses the reaction L-cysteinyl-[prolipoprotein] + a 1,2-diacyl-sn-glycero-3-phospho-(1'-sn-glycerol) = an S-1,2-diacyl-sn-glyceryl-L-cysteinyl-[prolipoprotein] + sn-glycerol 1-phosphate + H(+). Its pathway is protein modification; lipoprotein biosynthesis (diacylglyceryl transfer). Functionally, catalyzes the transfer of the diacylglyceryl group from phosphatidylglycerol to the sulfhydryl group of the N-terminal cysteine of a prolipoprotein, the first step in the formation of mature lipoproteins. In Chlorobaculum tepidum (strain ATCC 49652 / DSM 12025 / NBRC 103806 / TLS) (Chlorobium tepidum), this protein is Phosphatidylglycerol--prolipoprotein diacylglyceryl transferase.